The primary structure comprises 480 residues: Adenylosuccinate synthetase, chloroplastic (480 aa).

A chloroplast-targeting transit peptide spans 1–54; sequence MATARVMVADRARAFGGTTATRARRDDQGRRVTIARGIPSRARVVVARASERAY. GTP-binding positions include 69–75 and 97–99; these read GDEGKGK and GHT. Asp-70 serves as the catalytic Proton acceptor. Residues Asp-70 and Gly-97 each coordinate Mg(2+). IMP is bound by residues 70–73, 95–98, Thr-187, Arg-201, Asn-278, Thr-293, and Arg-357; these read DEGK and NAGH. The active-site Proton donor is His-98. Substrate is bound at residue 353–359; the sequence is TTTGRPR. GTP contacts are provided by residues Arg-359, 385–387, and 468–470; these read KLD and GVG.

Belongs to the adenylosuccinate synthetase family. Homodimer. Mg(2+) is required as a cofactor.

The protein resides in the plastid. It is found in the chloroplast. The catalysed reaction is IMP + L-aspartate + GTP = N(6)-(1,2-dicarboxyethyl)-AMP + GDP + phosphate + 2 H(+). It participates in purine metabolism; AMP biosynthesis via de novo pathway; AMP from IMP: step 1/2. Functionally, plays an important role in the de novo pathway and in the salvage pathway of purine nucleotide biosynthesis. Catalyzes the first committed step in the biosynthesis of AMP from IMP. The polypeptide is Adenylosuccinate synthetase, chloroplastic (Ostreococcus tauri).